The sequence spans 288 residues: Mortality factor 4-like protein 2 (288 aa).

A compositionally biased stretch (polar residues) spans Met-1–Ser-15. Residues Met-1–Phe-115 form a disordered region. Phosphoserine is present on Ser-71. In terms of domain architecture, MRG spans Ser-117–Leu-288.

In terms of assembly, component of the NuA4 histone acetyltransferase complex which contains the catalytic subunit KAT5/TIP60 and the subunits EP400, TRRAP/PAF400, BRD8/SMAP, EPC1, DMAP1/DNMAP1, RUVBL1/TIP49, RUVBL2, ING3, actin, ACTL6A/BAF53A, MORF4L1/MRG15, MORF4L2/MRGX, MRGBP, YEATS4/GAS41 and VPS72/YL1. The NuA4 complex interacts with MYC and the adenovirus E1A protein. MORF4L1 may also participate in the formation of NuA4 related complexes which lack the KAT5/TIP60 catalytic subunit, but which include the SWI/SNF related protein SRCAP. Component of the MSIN3A histone deacetylase complex, which includes SIN3A, HDAC2, ARID4B, MORF4L1, RBBP4/RbAp48, and RBBP7/RbAp46. Interacts with MRFAP1 and RB1. May also interact with one or more as yet undefined members of the TLE (transducin-like enhancer of split) family of transcriptional repressors.

The protein localises to the nucleus. Functionally, component of the NuA4 histone acetyltransferase complex which is involved in transcriptional activation of select genes principally by acetylation of nucleosomal histone H4 and H2A. This modification may both alter nucleosome - DNA interactions and promote interaction of the modified histones with other proteins which positively regulate transcription. This complex may be required for the activation of transcriptional programs associated with oncogene and proto-oncogene mediated growth induction, tumor suppressor mediated growth arrest and replicative senescence, apoptosis, and DNA repair. The NuA4 complex ATPase and helicase activities seem to be, at least in part, contributed by the association of RUVBL1 and RUVBL2 with EP400. NuA4 may also play a direct role in DNA repair when directly recruited to sites of DNA damage. Also a component of the MSIN3A complex which acts to repress transcription by deacetylation of nucleosomal histones. This is Mortality factor 4-like protein 2 (Morf4l2) from Rattus norvegicus (Rat).